Consider the following 677-residue polypeptide: Pro-neuregulin-1, membrane-bound isoform (677 aa).

Positions 1–12 (MAEKKKVKEGKG) are enriched in basic and acidic residues. Disordered stretches follow at residues 1-43 (MAEK…KEIK) and 78-106 (GAKNKPDSKPEHIKIRGKKKSSELQISKA). The Extracellular segment spans residues 1–260 (MAEKKKVKEG…MEAEELYQKR (260 aa)). Over residues 13–24 (RKGKGKKDRKGK) the composition is skewed to basic residues. In terms of domain architecture, Ig-like C2-type spans 37-132 (PKLKEIKTQS…GNDTVTVNVT (96 aa)). A disulfide bridge links C57 with C116. Residues 78 to 91 (GAKNKPDSKPEHIK) are compositionally biased toward basic and acidic residues. N-linked (GlcNAc...) asparagine glycans are attached at residues N124 and N130. Residues 188–232 (HLIKCSDKEKTYCVNGGECYVLNGITSSNQFMCKCKPGFTGARCT) enclose the EGF-like domain. Intrachain disulfides connect C192/C206, C200/C220, and C222/C231. A helical membrane pass occupies residues 261–280 (VLTITGICIDLLVVGDMCVV). Over 281-677 (DAYCKTKKQR…RKMTCKTLFI (397 aa)) the chain is Cytoplasmic. Over residues 294–315 (NDRLRQSLRERNKNITNKDNRP) the composition is skewed to basic and acidic residues. Disordered regions lie at residues 294-326 (NDRLRQSLRERNKNITNKDNRPHNPKNPPPRKN), 350-375 (ETSFSTSHYTSTTHHSTTVTQTPSHS), 397-418 (SVENSRHTSPTGPRGRLNGIGG), 457-479 (VEFKTPISPKSPCLETSPPESSL), and 503-617 (PPRL…FLSI). Low complexity predominate over residues 351–375 (TSFSTSHYTSTTHHSTTVTQTPSHS). Residues 397-407 (SVENSRHTSPT) are compositionally biased toward polar residues. Over residues 505–515 (RLREKRYDRKT) the composition is skewed to basic and acidic residues. Positions 568–578 (VNSRRQKRTKP) are enriched in basic residues. A compositionally biased stretch (low complexity) spans 591–600 (DSSSESSTSE).

Belongs to the neuregulin family. Post-translationally, proteolytic cleavage close to the plasma membrane on the external face leads to the release of the soluble growth factor form. Extensive glycosylation precedes the proteolytic cleavage. As to expression, isoform alpha1 is expressed in brain and muscle. Isoform CRD is expressed in brain and spinal cord, but at very low level in muscle.

It is found in the cell membrane. Its subcellular location is the secreted. Its function is as follows. Direct ligand for the ERBB tyrosine kinase receptors. Induces expression of acetylcholine receptor in synaptic nuclei. This is Pro-neuregulin-1, membrane-bound isoform (nrg1) from Xenopus laevis (African clawed frog).